Here is a 205-residue protein sequence, read N- to C-terminus: ATP-dependent Clp protease proteolytic subunit (205 aa).

S107 serves as the catalytic Nucleophile. H132 is an active-site residue.

Belongs to the peptidase S14 family. In terms of assembly, fourteen ClpP subunits assemble into 2 heptameric rings which stack back to back to give a disk-like structure with a central cavity, resembling the structure of eukaryotic proteasomes.

Its subcellular location is the cytoplasm. The enzyme catalyses Hydrolysis of proteins to small peptides in the presence of ATP and magnesium. alpha-casein is the usual test substrate. In the absence of ATP, only oligopeptides shorter than five residues are hydrolyzed (such as succinyl-Leu-Tyr-|-NHMec, and Leu-Tyr-Leu-|-Tyr-Trp, in which cleavage of the -Tyr-|-Leu- and -Tyr-|-Trp bonds also occurs).. Its function is as follows. Cleaves peptides in various proteins in a process that requires ATP hydrolysis. Has a chymotrypsin-like activity. Plays a major role in the degradation of misfolded proteins. This Pseudoalteromonas translucida (strain TAC 125) protein is ATP-dependent Clp protease proteolytic subunit.